Here is a 192-residue protein sequence, read N- to C-terminus: Adenylate kinase (192 aa).

Position 10–15 (10–15 (GAGKGT)) interacts with ATP. Residues 30 to 59 (STGDMLREVIRRETEIGKKAKAMINAGTLV) form an NMP region. AMP contacts are provided by residues Thr-31, Arg-36, 57-59 (TLV), 85-88 (GYPR), and Gln-92. The LID stretch occupies residues 126-142 (KRVQETIIAGGQVRSDD). Arg-127 contributes to the ATP binding site. The AMP site is built by Arg-139 and Arg-150. Ile-178 contributes to the ATP binding site.

Belongs to the adenylate kinase family. Monomer.

It localises to the cytoplasm. The enzyme catalyses AMP + ATP = 2 ADP. It participates in purine metabolism; AMP biosynthesis via salvage pathway; AMP from ADP: step 1/1. Functionally, catalyzes the reversible transfer of the terminal phosphate group between ATP and AMP. Plays an important role in cellular energy homeostasis and in adenine nucleotide metabolism. This is Adenylate kinase from Bartonella henselae (strain ATCC 49882 / DSM 28221 / CCUG 30454 / Houston 1) (Rochalimaea henselae).